The sequence spans 345 residues: Beta-hexosaminidase (345 aa).

Residues Asp-60, Arg-68, Arg-132, and 162 to 163 (KH) each bind substrate. His-175 serves as the catalytic Proton donor/acceptor. Asp-247 acts as the Nucleophile in catalysis.

The protein belongs to the glycosyl hydrolase 3 family. NagZ subfamily.

It localises to the cytoplasm. The catalysed reaction is Hydrolysis of terminal non-reducing N-acetyl-D-hexosamine residues in N-acetyl-beta-D-hexosaminides.. It participates in cell wall biogenesis; peptidoglycan recycling. Functionally, plays a role in peptidoglycan recycling by cleaving the terminal beta-1,4-linked N-acetylglucosamine (GlcNAc) from peptide-linked peptidoglycan fragments, giving rise to free GlcNAc, anhydro-N-acetylmuramic acid and anhydro-N-acetylmuramic acid-linked peptides. This Actinobacillus pleuropneumoniae serotype 5b (strain L20) protein is Beta-hexosaminidase.